The chain runs to 193 residues: dTTP/UTP pyrophosphatase (193 aa).

D71 acts as the Proton acceptor in catalysis.

Belongs to the Maf family. YhdE subfamily. The cofactor is a divalent metal cation.

Its subcellular location is the cytoplasm. It catalyses the reaction dTTP + H2O = dTMP + diphosphate + H(+). The enzyme catalyses UTP + H2O = UMP + diphosphate + H(+). In terms of biological role, nucleoside triphosphate pyrophosphatase that hydrolyzes dTTP and UTP. May have a dual role in cell division arrest and in preventing the incorporation of modified nucleotides into cellular nucleic acids. The sequence is that of dTTP/UTP pyrophosphatase from Dictyoglomus thermophilum (strain ATCC 35947 / DSM 3960 / H-6-12).